Consider the following 166-residue polypeptide: MALGLEDKKAIVAEVSEVAKTALSAVVADSRGVTVSSMTELRKEAREAGVYVRVVRNTLARRAVEGTDFECLAESFVGPTLIAFSNEHPGAAARLLKAFAKTNSKFEVKALAFNGELIPAGDIDRLATLPTYDEAIAKLMSVIQGATSKFVRTLAAVRDQKEQEAA.

The protein belongs to the universal ribosomal protein uL10 family. In terms of assembly, part of the ribosomal stalk of the 50S ribosomal subunit. The N-terminus interacts with L11 and the large rRNA to form the base of the stalk. The C-terminus forms an elongated spine to which L12 dimers bind in a sequential fashion forming a multimeric L10(L12)X complex.

Forms part of the ribosomal stalk, playing a central role in the interaction of the ribosome with GTP-bound translation factors. This is Large ribosomal subunit protein uL10 from Marinomonas sp. (strain MWYL1).